Consider the following 689-residue polypeptide: DNA topoisomerase 1 (689 aa).

The region spanning 3-113 is the Toprim domain; the sequence is DNLVIVESPA…KENRVVFNEI (111 aa). Positions 9 and 82 each coordinate Mg(2+). The 429-residue stretch at 129-557 folds into the Topo IA-type catalytic domain; it reads EMNLVDAQQA…FFSSFKQDVE (429 aa). The tract at residues 163 to 168 is interaction with DNA; the sequence is SAGRVQ. The O-(5'-phospho-DNA)-tyrosine intermediate role is filled by tyrosine 298. The disordered stretch occupies residues 328 to 356; that stretch reads SKRKASGKQGDQDAHEAIRPSSTMRTPDD. C4-type zinc fingers lie at residues 577–603, 617–645, and 658–681; these read CEIC…FPDC, CPKC…YPEC, and CPKC…CSNC.

Belongs to the type IA topoisomerase family. As to quaternary structure, monomer. The cofactor is Mg(2+).

The catalysed reaction is ATP-independent breakage of single-stranded DNA, followed by passage and rejoining.. Functionally, releases the supercoiling and torsional tension of DNA, which is introduced during the DNA replication and transcription, by transiently cleaving and rejoining one strand of the DNA duplex. Introduces a single-strand break via transesterification at a target site in duplex DNA. The scissile phosphodiester is attacked by the catalytic tyrosine of the enzyme, resulting in the formation of a DNA-(5'-phosphotyrosyl)-enzyme intermediate and the expulsion of a 3'-OH DNA strand. The free DNA strand then undergoes passage around the unbroken strand, thus removing DNA supercoils. Finally, in the religation step, the DNA 3'-OH attacks the covalent intermediate to expel the active-site tyrosine and restore the DNA phosphodiester backbone. The chain is DNA topoisomerase 1 from Staphylococcus aureus (strain USA300).